A 243-amino-acid polypeptide reads, in one-letter code: ATP synthase subunit a, chloroplastic (243 aa).

The next 5 membrane-spanning stretches (helical) occupy residues 32-52 (AQVL…ALIA), 91-111 (IPFV…GALI), 130-150 (INTT…AGLN), 195-215 (LVVA…MMFL), and 216-236 (GLFT…AYIG).

The protein belongs to the ATPase A chain family. F-type ATPases have 2 components, CF(1) - the catalytic core - and CF(0) - the membrane proton channel. CF(1) has five subunits: alpha(3), beta(3), gamma(1), delta(1), epsilon(1). CF(0) has four main subunits: a, b, b' and c.

It localises to the plastid. The protein localises to the chloroplast thylakoid membrane. Its function is as follows. Key component of the proton channel; it plays a direct role in the translocation of protons across the membrane. The sequence is that of ATP synthase subunit a, chloroplastic from Chaetosphaeridium globosum (Charophycean green alga).